The primary structure comprises 345 residues: MNTEASQDQTVTETPGVRLRQARESLGLTQQTVAERLCLKVSTIRDIEEDNAQANLASTFHRGYIRSYAKLVHLPEDELLPILEKQAPVRAAKVAPMQSFSLGKKHKKRDGWLMSFTWLIVLVVLGLTGAWWWQNHQAQQAEIANMVDQSSAQLSQNGGQPVPLTDDNSDAIAPTDAPAPVANGQPVPLTNHSGSAITNSATTSSVPKTTSTEPVDTANTNTTMHQEGAASAAVSPSQVPQPGMPTGQPPLPTADAGVSGSASSVGALVMNFTADCWLQVVDATGKTLFSGIQKGGAVLNLAGKAPYKLTIGAPGALTISYQGNPVDLSKFIKANRVARLTVGVE.

Over 1 to 111 (MNTEASQDQT…LGKKHKKRDG (111 aa)) the chain is Cytoplasmic. Positions 19 to 79 (LRQARESLGL…KLVHLPEDEL (61 aa)) constitute an HTH cro/C1-type domain. A DNA-binding region (H-T-H motif) is located at residues 30 to 49 (QQTVAERLCLKVSTIRDIEE). Residues 112-132 (WLMSFTWLIVLVVLGLTGAWW) form a helical; Signal-anchor for type II membrane protein membrane-spanning segment. Topologically, residues 133 to 345 (WQNHQAQQAE…RVARLTVGVE (213 aa)) are periplasmic. The interval 151 to 260 (SAQLSQNGGQ…LPTADAGVSG (110 aa)) is disordered. Residues 188 to 225 (PLTNHSGSAITNSATTSSVPKTTSTEPVDTANTNTTMH) are compositionally biased toward polar residues. Positions 229 to 241 (AASAAVSPSQVPQ) are enriched in low complexity.

Belongs to the RodZ family.

The protein resides in the cell inner membrane. Functionally, cytoskeletal protein that is involved in cell-shape control through regulation of the length of the long axis. The chain is Cytoskeleton protein RodZ from Yersinia pestis (strain Pestoides F).